Consider the following 72-residue polypeptide: Exodeoxyribonuclease 7 small subunit (72 aa).

This sequence belongs to the XseB family. Heterooligomer composed of large and small subunits.

The protein resides in the cytoplasm. The enzyme catalyses Exonucleolytic cleavage in either 5'- to 3'- or 3'- to 5'-direction to yield nucleoside 5'-phosphates.. Bidirectionally degrades single-stranded DNA into large acid-insoluble oligonucleotides, which are then degraded further into small acid-soluble oligonucleotides. The polypeptide is Exodeoxyribonuclease 7 small subunit (Chlamydia trachomatis serovar A (strain ATCC VR-571B / DSM 19440 / HAR-13)).